We begin with the raw amino-acid sequence, 217 residues long: D-methionine transport system permease protein MetI (217 aa).

The ABC transmembrane type-1 domain occupies 13–204 (VWETLMMTFV…LLVILVYLIQ (192 aa)). 5 helical membrane-spanning segments follow: residues 20-40 (TFVS…LLYV), 58-78 (GVVN…MIPF), 81-101 (MIVG…VGAA), 152-172 (ITLI…AGGL), and 186-206 (ATVM…IQLS).

It belongs to the binding-protein-dependent transport system permease family. CysTW subfamily.

The protein localises to the cell inner membrane. Part of the binding-protein-dependent transport system for D-methionine and the toxic methionine analog alpha-methyl-methionine. Probably responsible for the translocation of the substrate across the membrane. The polypeptide is D-methionine transport system permease protein MetI (metI) (Yersinia pestis).